Reading from the N-terminus, the 874-residue chain is Alanine--tRNA ligase (874 aa).

The Zn(2+) site is built by histidine 564, histidine 568, cysteine 665, and histidine 669.

The protein belongs to the class-II aminoacyl-tRNA synthetase family. It depends on Zn(2+) as a cofactor.

It localises to the cytoplasm. The catalysed reaction is tRNA(Ala) + L-alanine + ATP = L-alanyl-tRNA(Ala) + AMP + diphosphate. In terms of biological role, catalyzes the attachment of alanine to tRNA(Ala) in a two-step reaction: alanine is first activated by ATP to form Ala-AMP and then transferred to the acceptor end of tRNA(Ala). Also edits incorrectly charged Ser-tRNA(Ala) and Gly-tRNA(Ala) via its editing domain. This is Alanine--tRNA ligase from Paraburkholderia phytofirmans (strain DSM 17436 / LMG 22146 / PsJN) (Burkholderia phytofirmans).